A 615-amino-acid polypeptide reads, in one-letter code: Proteasome-associated ATPase (615 aa).

Residues 1–36 (MSESERPEAGDGTDALGASPDTPLSSEDAAELEQLR) form a disordered region. Residues 25 to 102 (SSEDAAELEQ…LREEVDRLGQ (78 aa)) are a coiled coil. Position 302 to 307 (302 to 307 (GCGKTL)) interacts with ATP. The interval 614 to 615 (YL) is docks into pockets in the proteasome alpha-ring.

Belongs to the AAA ATPase family. As to quaternary structure, homohexamer. Assembles into a hexameric ring structure that caps the 20S proteasome core. Strongly interacts with the prokaryotic ubiquitin-like protein Pup through a hydrophobic interface; the interacting region of ARC lies in its N-terminal coiled-coil domain. There is one Pup binding site per ARC hexamer ring. Upon ATP-binding, the C-terminus of ARC interacts with the alpha-rings of the proteasome core, possibly by binding to the intersubunit pockets.

It participates in protein degradation; proteasomal Pup-dependent pathway. ATPase which is responsible for recognizing, binding, unfolding and translocation of pupylated proteins into the bacterial 20S proteasome core particle. May be essential for opening the gate of the 20S proteasome via an interaction with its C-terminus, thereby allowing substrate entry and access to the site of proteolysis. Thus, the C-termini of the proteasomal ATPase may function like a 'key in a lock' to induce gate opening and therefore regulate proteolysis. This chain is Proteasome-associated ATPase, found in Mycolicibacterium gilvum (strain PYR-GCK) (Mycobacterium gilvum (strain PYR-GCK)).